The sequence spans 109 residues: Cell division protein ZapA (109 aa).

Residues 21-99 (PEQRDALNQA…IEQALLEQGR (79 aa)) are a coiled coil.

Belongs to the ZapA family. Type 1 subfamily. As to quaternary structure, homodimer. Interacts with FtsZ.

The protein localises to the cytoplasm. Its function is as follows. Activator of cell division through the inhibition of FtsZ GTPase activity, therefore promoting FtsZ assembly into bundles of protofilaments necessary for the formation of the division Z ring. It is recruited early at mid-cell but it is not essential for cell division. The chain is Cell division protein ZapA from Klebsiella pneumoniae (strain 342).